A 684-amino-acid chain; its full sequence is Chaperone protein HtpG (684 aa).

Residues 1 to 329 form an a; substrate-binding region; the sequence is MSKKGTIGVT…SPDIPLNVSR (329 aa). A b region spans residues 330–548; sequence SYLQSDANVK…FMRRMRDMAQ (219 aa). The interval 549 to 684 is c; it reads LQPGMSFYGE…EFIRRSQRLL (136 aa).

It belongs to the heat shock protein 90 family. As to quaternary structure, homodimer.

Its subcellular location is the cytoplasm. Functionally, molecular chaperone. Has ATPase activity. The chain is Chaperone protein HtpG from Porphyromonas gingivalis (strain ATCC BAA-308 / W83).